The sequence spans 476 residues: Proline--tRNA ligase 2 (476 aa).

The protein belongs to the class-II aminoacyl-tRNA synthetase family. ProS type 3 subfamily. As to quaternary structure, homodimer.

Its subcellular location is the cytoplasm. The catalysed reaction is tRNA(Pro) + L-proline + ATP = L-prolyl-tRNA(Pro) + AMP + diphosphate. In terms of biological role, catalyzes the attachment of proline to tRNA(Pro) in a two-step reaction: proline is first activated by ATP to form Pro-AMP and then transferred to the acceptor end of tRNA(Pro). In Bacillus cereus (strain ATCC 10987 / NRS 248), this protein is Proline--tRNA ligase 2.